Here is a 582-residue protein sequence, read N- to C-terminus: ATP-dependent lipid A-core flippase (582 aa).

Helical transmembrane passes span 16–36 (LWPH…ALVI), 69–89 (FIIL…GYCM), 153–173 (IIGL…VLVV), 250–270 (LANP…LYLA), and 275–295 (IKET…FGLL). One can recognise an ABC transmembrane type-1 domain in the interval 29-310 (VAVVALVINA…LTSVTSDFQR (282 aa)). One can recognise an ABC transporter domain in the interval 342-578 (IKVDNVTFTY…DGAYAQLHRI (237 aa)). 376–383 (GRSGSGKS) serves as a coordination point for ATP.

This sequence belongs to the ABC transporter superfamily. Lipid exporter (TC 3.A.1.106) family. In terms of assembly, homodimer.

It localises to the cell inner membrane. It catalyses the reaction ATP + H2O + lipid A-core oligosaccharideSide 1 = ADP + phosphate + lipid A-core oligosaccharideSide 2.. Involved in lipopolysaccharide (LPS) biosynthesis. Translocates lipid A-core from the inner to the outer leaflet of the inner membrane. Transmembrane domains (TMD) form a pore in the inner membrane and the ATP-binding domain (NBD) is responsible for energy generation. This Aliivibrio fischeri (strain ATCC 700601 / ES114) (Vibrio fischeri) protein is ATP-dependent lipid A-core flippase.